Reading from the N-terminus, the 147-residue chain is Small ribosomal subunit protein uS12 (147 aa).

It belongs to the universal ribosomal protein uS12 family. As to quaternary structure, part of the 30S ribosomal subunit.

Its function is as follows. With S4 and S5 plays an important role in translational accuracy. Located at the interface of the 30S and 50S subunits. The polypeptide is Small ribosomal subunit protein uS12 (Thermococcus celer).